Reading from the N-terminus, the 750-residue chain is MELDKVKTHSLHCNAAVLSSLQAPTSATSPQSFTSKANAVAEAAFIENSNQQQNVQKDLNSHNRDCDSPVSSTSELEKEFDDLRKLHTSSLTNSVVVGKSTGSLNGDYSITSATSKTKTLESVVTINSATGSACLTIASTADHIKKRIPNSRTPTRKALRIKFYRNGDRFYPGVTIPVSNERYRSFERLFEDLTRLLEENVKIPGAVRTIYNMCGKKITSLDELEDGQSYVCSCNNENFKKVEYNPGSQPLSNLTLTNNSRPYNQRLAKHRPASPLKNGLLVGSSPLAVCGGGTGNGSPLIASKSSDRVTVVHPRIVTLIRSGTKPRRIMRLLLNKRNSPSFDHVLTAITQVVRLDTGYVRKVFTLSGISVVQLSDFFESDDVFFAYGTERINTAEDFKLEPEELKAINVIRKTMRTAGTTCKGPKPKMPIKSKKVYPPSVNSEAFKAATAPEDDRHATLLTSTGIEINELPSNIRSTYTLGKIIGDGNFAIVFKIKHRQTGDSYALKIIDKNKCKGKEHYIDAEVRVMKKLNHPHIISLILSVDQNTNMYLVLEYVSGGDLFDAITQVTRFAESQSRIMIRHLGAAMTYLHSMGIVHRDIKPENLLVKLDEHGNVLELKLADFGLACEVNDLLYAVCGTPTYVAPEILLEVGYGLKIDVWAAGIILYILLCGFPPFVAPDNQQEPLFDAIISGIYEFPDPYWSDIGDGVRDLIANMLQSDPDVRFTSEDILDHYWTIGNEGNECTTYKR.

Doublecortin domains are found at residues 159 to 245 and 315 to 398; these read LRIK…VEYN and RIVT…AEDF. One can recognise a Protein kinase domain in the interval 479 to 737; the sequence is YTLGKIIGDG…SEDILDHYWT (259 aa). ATP contacts are provided by residues 485–493 and K508; that span reads IGDGNFAIV. D600 functions as the Proton acceptor in the catalytic mechanism.

It belongs to the protein kinase superfamily. CAMK Ser/Thr protein kinase family. CaMK subfamily.

The enzyme catalyses L-seryl-[protein] + ATP = O-phospho-L-seryl-[protein] + ADP + H(+). It carries out the reaction L-threonyl-[protein] + ATP = O-phospho-L-threonyl-[protein] + ADP + H(+). This chain is Serine/threonine-protein kinase GE16371, found in Drosophila yakuba (Fruit fly).